Here is a 372-residue protein sequence, read N- to C-terminus: Proton-coupled zinc antiporter SLC30A2 (372 aa).

Residues Met-1 to Glu-140 are Cytoplasmic-facing. The short motif at His-51–His-54 is the Mitochondrial localization signal element. Zn(2+) is bound by residues Cys-53, His-106, and Asp-110. Residues Ile-141–Leu-161 traverse the membrane as a helical segment. At Ala-162–Gly-175 the chain is on the lumenal side. The chain crosses the membrane as a helical span at residues Gly-176–Leu-196. At His-197–Ala-220 the chain is on the cytoplasmic side. A helical membrane pass occupies residues Phe-221–Leu-241. Positions 223 and 227 each coordinate Zn(2+). At Tyr-242–Tyr-249 the chain is on the lumenal side. The chain crosses the membrane as a helical span at residues Val-250 to Leu-270. At Arg-271 to His-304 the chain is on the cytoplasmic side. Residues Leu-294 to Leu-295 carry the Lysosomal targeting motif motif. A Phosphoserine modification is found at Ser-296. Zn(2+) contacts are provided by His-304, His-321, and Glu-355. A helical membrane pass occupies residues Ser-305–Ala-325. Residues Gln-326–Asp-372 are Lumenal-facing.

This sequence belongs to the cation diffusion facilitator (CDF) transporter (TC 2.A.4) family. SLC30A subfamily. As to quaternary structure, homodimer. Interacts (via lysosomal targeting motif) with AP3D1; in AP-3-mediated transport to lysosomes. Interacts with TMEM163. Phosphorylated at Ser-296. Phosphorylation at Ser-296 prevents localization to lysosomes. Dephosphorylation of Ser-296 which triggers localization to lysosomes, accumulation of zinc into lysosomes and lysosomal-mediated cell death is induced by TNF-alpha.

It localises to the cytoplasmic vesicle. The protein resides in the secretory vesicle membrane. Its subcellular location is the zymogen granule membrane. It is found in the endosome membrane. The protein localises to the lysosome membrane. It localises to the mitochondrion inner membrane. The protein resides in the cell membrane. It carries out the reaction Zn(2+)(in) + 2 H(+)(out) = Zn(2+)(out) + 2 H(+)(in). Electroneutral proton-coupled antiporter concentrating zinc ions into a variety of intracellular organelles including endosomes, zymogen granules and mitochondria. Thereby, plays a crucial role in cellular zinc homeostasis to confer upon cells protection against its potential cytotoxicity. Regulates the zinc concentration of milk, through the transport of zinc ions into secretory vesicles of mammary cells. By concentrating zinc ions into lysosomes participates to lysosomal-mediated cell death during early mammary gland involution. Functionally, electroneutral proton-coupled antiporter mediating the efflux of zinc ions through the plasma membrane. The polypeptide is Proton-coupled zinc antiporter SLC30A2 (Homo sapiens (Human)).